The primary structure comprises 268 residues: 4-diphosphocytidyl-2-C-methyl-D-erythritol kinase (268 aa).

The active site involves K9. Residue 88–98 (PPGAGLGGGSS) coordinates ATP. D130 is a catalytic residue.

It belongs to the GHMP kinase family. IspE subfamily.

The catalysed reaction is 4-CDP-2-C-methyl-D-erythritol + ATP = 4-CDP-2-C-methyl-D-erythritol 2-phosphate + ADP + H(+). It functions in the pathway isoprenoid biosynthesis; isopentenyl diphosphate biosynthesis via DXP pathway; isopentenyl diphosphate from 1-deoxy-D-xylulose 5-phosphate: step 3/6. Functionally, catalyzes the phosphorylation of the position 2 hydroxy group of 4-diphosphocytidyl-2C-methyl-D-erythritol. In Aquifex aeolicus (strain VF5), this protein is 4-diphosphocytidyl-2-C-methyl-D-erythritol kinase.